The sequence spans 322 residues: Ferredoxin--NADP reductase (322 aa).

Positions 34, 42, 47, 87, 120, 279, and 320 each coordinate FAD.

Belongs to the ferredoxin--NADP reductase type 2 family. As to quaternary structure, homodimer. FAD is required as a cofactor.

It catalyses the reaction 2 reduced [2Fe-2S]-[ferredoxin] + NADP(+) + H(+) = 2 oxidized [2Fe-2S]-[ferredoxin] + NADPH. In Streptococcus gordonii (strain Challis / ATCC 35105 / BCRC 15272 / CH1 / DL1 / V288), this protein is Ferredoxin--NADP reductase.